The chain runs to 98 residues: NADH-ubiquinone oxidoreductase chain 4L (98 aa).

The next 3 helical transmembrane spans lie at 1–21 (MIPT…GMLT), 27–47 (VASL…TALI), and 61–81 (IILL…LISI).

The protein belongs to the complex I subunit 4L family. Core subunit of respiratory chain NADH dehydrogenase (Complex I) which is composed of 45 different subunits.

Its subcellular location is the mitochondrion inner membrane. The enzyme catalyses a ubiquinone + NADH + 5 H(+)(in) = a ubiquinol + NAD(+) + 4 H(+)(out). In terms of biological role, core subunit of the mitochondrial membrane respiratory chain NADH dehydrogenase (Complex I) which catalyzes electron transfer from NADH through the respiratory chain, using ubiquinone as an electron acceptor. Part of the enzyme membrane arm which is embedded in the lipid bilayer and involved in proton translocation. This Macaca sylvanus (Barbary macaque) protein is NADH-ubiquinone oxidoreductase chain 4L (MT-ND4L).